Consider the following 185-residue polypeptide: Elongation factor P (185 aa).

This sequence belongs to the elongation factor P family.

The protein resides in the cytoplasm. It participates in protein biosynthesis; polypeptide chain elongation. Involved in peptide bond synthesis. Stimulates efficient translation and peptide-bond synthesis on native or reconstituted 70S ribosomes in vitro. Probably functions indirectly by altering the affinity of the ribosome for aminoacyl-tRNA, thus increasing their reactivity as acceptors for peptidyl transferase. In Acetivibrio thermocellus (strain ATCC 27405 / DSM 1237 / JCM 9322 / NBRC 103400 / NCIMB 10682 / NRRL B-4536 / VPI 7372) (Clostridium thermocellum), this protein is Elongation factor P.